A 680-amino-acid chain; its full sequence is Anosmin-1 (680 aa).

An N-terminal signal peptide occupies residues 1 to 24 (MVPGVPGAVLTLCLWLAASSGCLA). 5 disulfide bridges follow: C49–C83, C53–C77, C86–C105, C90–C101, and C116–C120. Residue N71 is glycosylated (N-linked (GlcNAc...) asparagine). The 50-residue stretch at 127-176 (LLVKQGDCPAPEKASGFAAACVESCEVDNECSGVKKCCSNGCGHTCQVPK) folds into the WAP domain. Fibronectin type-III domains are found at residues 186–287 (PRKE…SKDP), 292–400 (APAN…THAT), 425–523 (PTRP…TPPC), and 550–658 (KPEN…LPPS). N-linked (GlcNAc...) asparagine glycans are attached at residues N209, N300, N470, N553, and N564. Residues 642 to 680 (EGPATIKTFRTPELPPSSAHRSHLKHRHPHHYKPSPERY) are disordered. A compositionally biased stretch (basic residues) spans 661–674 (HRSHLKHRHPHHYK).

As to quaternary structure, interacts with FGFR1; this interaction does not interfere with FGF2-binding to FGFR1. Binds heparin. Heparin may promote or interfere with ANOS1-FGFR1-FGF2 complex formation depending on the sequential order of its binding to the various constituents. For instance, heparin-ANOS1 interaction favors subsequent binding to pre-existing binary FGFR1-FGF2 complex, while heparin-FGF2 complex does not interact with ANOS1-FGFR1. Post-translationally, N-glycosylated. May be proteolytically cleaved at the cell surface and released from the cell surface. As to expression, expressed in the cerebellum (at protein level).

It localises to the cell membrane. Its subcellular location is the secreted. Its function is as follows. Has a dual branch-promoting and guidance activity, which may play an important role in the patterning of mitral and tufted cell collaterals to the olfactory cortex. Chemoattractant for fetal olfactory epithelial cells. This chain is Anosmin-1, found in Homo sapiens (Human).